Reading from the N-terminus, the 389-residue chain is S-adenosylmethionine synthase (389 aa).

ATP is bound at residue H17. D19 contacts Mg(2+). E45 serves as a coordination point for K(+). The L-methionine site is built by E58 and Q101. Residues 101-111 (QSPDISQGVTE) are flexible loop. Residues 168 to 170 (DSK), 234 to 235 (RF), D243, 249 to 250 (RK), A266, and K270 each bind ATP. D243 contacts L-methionine. K274 lines the L-methionine pocket.

This sequence belongs to the AdoMet synthase family. In terms of assembly, homotetramer; dimer of dimers. Mg(2+) is required as a cofactor. K(+) serves as cofactor.

It is found in the cytoplasm. The catalysed reaction is L-methionine + ATP + H2O = S-adenosyl-L-methionine + phosphate + diphosphate. The protein operates within amino-acid biosynthesis; S-adenosyl-L-methionine biosynthesis; S-adenosyl-L-methionine from L-methionine: step 1/1. Functionally, catalyzes the formation of S-adenosylmethionine (AdoMet) from methionine and ATP. The overall synthetic reaction is composed of two sequential steps, AdoMet formation and the subsequent tripolyphosphate hydrolysis which occurs prior to release of AdoMet from the enzyme. This Geobacter metallireducens (strain ATCC 53774 / DSM 7210 / GS-15) protein is S-adenosylmethionine synthase.